Here is a 348-residue protein sequence, read N- to C-terminus: GTPase Obg (348 aa).

The Obg domain occupies 1-160 (MHFLDQAKIF…MWVWLRLKLL (160 aa)). Residues 120–145 (RGGDGGRGNASYKTSTNRAPRQHGPG) form a disordered region. The OBG-type G domain occupies 161–328 (ADAGLVGLPN…VLDKLLEAIG (168 aa)). GTP contacts are provided by residues 167–174 (GLPNAGKS), 192–196 (FTTLR), 213–216 (DIPG), 280–283 (NKID), and 309–311 (SGA). Residues Ser174 and Thr194 each contribute to the Mg(2+) site. The segment at 326–348 (AIGQPEPGPDADEEEKGGDWSPI) is disordered.

It belongs to the TRAFAC class OBG-HflX-like GTPase superfamily. OBG GTPase family. In terms of assembly, monomer. The cofactor is Mg(2+).

It is found in the cytoplasm. Functionally, an essential GTPase which binds GTP, GDP and possibly (p)ppGpp with moderate affinity, with high nucleotide exchange rates and a fairly low GTP hydrolysis rate. Plays a role in control of the cell cycle, stress response, ribosome biogenesis and in those bacteria that undergo differentiation, in morphogenesis control. In Sphingopyxis alaskensis (strain DSM 13593 / LMG 18877 / RB2256) (Sphingomonas alaskensis), this protein is GTPase Obg.